The primary structure comprises 787 residues: Probable basic-leucine zipper transcription factor J (787 aa).

Over residues 18–90 (NSNIHNNTHN…NNTQNTNNGT (73 aa)) the composition is skewed to low complexity. Disordered stretches follow at residues 18–95 (NSNI…LTPL), 153–173 (LNLS…NNNP), 186–306 (LQSQ…NNNT), 343–372 (DSLL…IQTS), 401–441 (LSSA…NNSN), and 473–507 (ASSE…DEDQ). 4 stretches are compositionally biased toward low complexity: residues 186-223 (LQSQ…SSPI), 235-258 (SSPI…STSP), 273-305 (NNNN…LNNN), and 351-366 (NNNN…NNNN). Low complexity predominate over residues 473-483 (ASSESAQSESS). Residues 549–612 (ELKKQRRLVK…KALKKQLYSL (64 aa)) enclose the bZIP domain. Residues 551-603 (KKQRRLVKNREYASQSRSRRKIYVENIETKLQKTNQDCASIKSQLNSVKEENK) form a basic motif region. The segment at 605 to 612 (LKKQLYSL) is leucine-zipper. Disordered regions lie at residues 723-747 (SNYI…VVST) and 763-787 (DKEV…SPLN). Over residues 763 to 778 (DKEVPQKCKDSSDLKC) the composition is skewed to basic and acidic residues.

The protein belongs to the bZIP family.

The protein resides in the nucleus. In terms of biological role, probable transcriptional regulator. This Dictyostelium discoideum (Social amoeba) protein is Probable basic-leucine zipper transcription factor J (bzpJ).